Consider the following 93-residue polypeptide: Cell division protein FtsB (93 aa).

Residues 1 to 3 (MRI) are Cytoplasmic-facing. A helical transmembrane segment spans residues 4–21 (FVIALTLLFGWLQYTLWF). The Periplasmic portion of the chain corresponds to 22–93 (GKNGVSDYYT…FYRIVDEEEH (72 aa)). A coiled-coil region spans residues 31 to 75 (TVEDEIEVQQQVNSKLQARNNEMFAEIDDLRQGLDAIEERARHEL).

Belongs to the FtsB family. As to quaternary structure, part of a complex composed of FtsB, FtsL and FtsQ.

Its subcellular location is the cell inner membrane. In terms of biological role, essential cell division protein. May link together the upstream cell division proteins, which are predominantly cytoplasmic, with the downstream cell division proteins, which are predominantly periplasmic. This chain is Cell division protein FtsB, found in Vibrio campbellii (strain ATCC BAA-1116).